The chain runs to 376 residues: Flap endonuclease 1 (376 aa).

An N-domain region spans residues 1–105 (MGIKGLSKLL…GELHKRKENA (105 aa)). Aspartate 34 serves as a coordination point for Mg(2+). The DNA site is built by arginine 47 and arginine 71. Positions 87, 159, 161, 180, and 182 each coordinate Mg(2+). Residues 123–254 (QAKKLMKRTA…ITAFELIQQY (132 aa)) are I-domain. Residue glutamate 159 participates in DNA binding. The DNA site is built by glycine 232 and aspartate 234. Aspartate 234 provides a ligand contact to Mg(2+). Residues 336 to 344 (AQGRLDSFF) form an interaction with PCNA region. A disordered region spans residues 354–376 (SEAASGVKRKKPTTKAKESRKKK). Positions 360–376 (VKRKKPTTKAKESRKKK) are enriched in basic residues.

It belongs to the XPG/RAD2 endonuclease family. FEN1 subfamily. In terms of assembly, interacts with PCNA. Three molecules of FEN1 bind to one PCNA trimer with each molecule binding to one PCNA monomer. PCNA stimulates the nuclease activity without altering cleavage specificity. The cofactor is Mg(2+). Post-translationally, phosphorylated. Phosphorylation upon DNA damage induces relocalization to the nuclear plasma.

It is found in the nucleus. It localises to the nucleolus. Its subcellular location is the nucleoplasm. The protein localises to the mitochondrion. Its function is as follows. Structure-specific nuclease with 5'-flap endonuclease and 5'-3' exonuclease activities involved in DNA replication and repair. During DNA replication, cleaves the 5'-overhanging flap structure that is generated by displacement synthesis when DNA polymerase encounters the 5'-end of a downstream Okazaki fragment. It enters the flap from the 5'-end and then tracks to cleave the flap base, leaving a nick for ligation. Also involved in the long patch base excision repair (LP-BER) pathway, by cleaving within the apurinic/apyrimidinic (AP) site-terminated flap. Acts as a genome stabilization factor that prevents flaps from equilibrating into structures that lead to duplications and deletions. Also possesses 5'-3' exonuclease activity on nicked or gapped double-stranded DNA, and exhibits RNase H activity. Also involved in replication and repair of rDNA and in repairing mitochondrial DNA. The polypeptide is Flap endonuclease 1 (Entamoeba histolytica (strain ATCC 30459 / HM-1:IMSS / ABRM)).